Reading from the N-terminus, the 767-residue chain is Cilium assembly protein DZIP1L (767 aa).

The interval 122–144 is disordered; sequence QQRGQQELGRQADELKGVREESR. A compositionally biased stretch (basic and acidic residues) spans 131 to 144; the sequence is RQADELKGVREESR. Residues 166–189 form a C2H2-type zinc finger; the sequence is HTCHLCDKTFMNATFLRGHIQRRH. Positions 205–406 form a coiled coil; the sequence is VEEVLEELRA…SQEEMIQSLS (202 aa). Ser426 carries the post-translational modification Phosphoserine. Residues 518 to 767 form a disordered region; it reads SRAKERQENG…SSGQPRVPAW (250 aa). Composition is skewed to polar residues over residues 533 to 547 and 574 to 588; these read PDGQ…STLV and RQSH…TQVS. The span at 607-616 shows a compositional bias: low complexity; sequence GPGMSTPPFS. Residues 658–675 are compositionally biased toward polar residues; sequence ENAQPPGQGSGTLVQSMV. Basic and acidic residues predominate over residues 677-686; that stretch reads NLEKQLEAPA.

The protein belongs to the DZIP C2H2-type zinc-finger protein family. In terms of assembly, interacts with SEPTIN2.

Its subcellular location is the cytoplasm. It localises to the cytoskeleton. It is found in the cilium basal body. The protein resides in the microtubule organizing center. The protein localises to the centrosome. Its subcellular location is the centriole. In terms of biological role, involved in primary cilium formation. Probably acts as a transition zone protein required for localization of PKD1/PC1 and PKD2/PC2 to the ciliary membrane. In Homo sapiens (Human), this protein is Cilium assembly protein DZIP1L.